Consider the following 146-residue polypeptide: Large ribosomal subunit protein uL15 (146 aa).

A compositionally biased stretch (basic and acidic residues) spans 1-13 (MKLNELHPSEGSR). The interval 1-56 (MKLNELHPSEGSRHARKRVGRGTSSGFGKTSGRGQKGQHARSGGNTRLGFEGGQMP) is disordered. Over residues 23-35 (TSSGFGKTSGRGQ) the composition is skewed to gly residues.

Belongs to the universal ribosomal protein uL15 family. As to quaternary structure, part of the 50S ribosomal subunit.

Functionally, binds to the 23S rRNA. The polypeptide is Large ribosomal subunit protein uL15 (Lactobacillus delbrueckii subsp. bulgaricus (strain ATCC 11842 / DSM 20081 / BCRC 10696 / JCM 1002 / NBRC 13953 / NCIMB 11778 / NCTC 12712 / WDCM 00102 / Lb 14)).